The following is a 794-amino-acid chain: Signal transducer and activator of transcription 5A (794 aa).

Tyr90 carries the post-translational modification Phosphotyrosine. The residue at position 128 (Ser128) is a Phosphoserine. Residues 589 to 686 form the SH2 domain; that stretch reads WNDGAILGFV…EVFSKYYTPV (98 aa). Phosphotyrosine is present on Tyr682. Position 694 is a phosphotyrosine; by JAK2 (Tyr694). Residues 771 to 794 form a disordered region; it reads PMDSLEPSLPPPTGLFTPGRGSLS.

Belongs to the transcription factor STAT family. In terms of assembly, forms a homodimer or a heterodimer with a related family member. Binds NR3C1. Interacts with NCOA1 and SOCS7. Interacts with ERBB4. Interacts with EBF4. Interacts with CD69. ISGylated. In terms of processing, tyrosine phosphorylated in response to KITLG/SCF, IL2, IL3, IL7, IL15, CSF2/GMCSF, GH1, PRL, EPO and THPO. Activated KIT promotes phosphorylation on tyrosine residues and subsequent translocation to the nucleus. Tyrosine phosphorylated in response to constitutively activated FGFR1, FGFR2, FGFR3 and FGFR4. Tyrosine phosphorylation is required for DNA-binding activity and dimerization. Serine phosphorylation is also required for maximal transcriptional activity. Tyrosine phosphorylated in response to signaling via activated FLT3; wild-type FLT3 results in much weaker phosphorylation than constitutively activated mutant FLT3. Alternatively, can be phosphorylated by JAK2 at Tyr-694.

Its subcellular location is the cytoplasm. It is found in the nucleus. Functionally, carries out a dual function: signal transduction and activation of transcription. Mediates cellular responses to the cytokine KITLG/SCF and other growth factors. May mediate cellular responses to activated FGFR1, FGFR2, FGFR3 and FGFR4. Binds to the GAS element and activates PRL-induced transcription. Regulates the expression of milk proteins during lactation. This chain is Signal transducer and activator of transcription 5A (STAT5A), found in Bos taurus (Bovine).